Consider the following 188-residue polypeptide: GMP synthase [glutamine-hydrolyzing] subunit A (188 aa).

One can recognise a Glutamine amidotransferase type-1 domain in the interval 3–188; sequence KVLVVAFGGQ…FQNFVELCKR (186 aa). The active-site Nucleophile is C79. Active-site residues include H166 and E168.

Heterodimer composed of a glutamine amidotransferase subunit (A) and a GMP-binding subunit (B).

It carries out the reaction XMP + L-glutamine + ATP + H2O = GMP + L-glutamate + AMP + diphosphate + 2 H(+). It functions in the pathway purine metabolism; GMP biosynthesis; GMP from XMP (L-Gln route): step 1/1. Its function is as follows. Catalyzes the synthesis of GMP from XMP. This Ignicoccus hospitalis (strain KIN4/I / DSM 18386 / JCM 14125) protein is GMP synthase [glutamine-hydrolyzing] subunit A.